A 437-amino-acid polypeptide reads, in one-letter code: MERWQNIHNVVVVGLGITGLSVVKHLRKTQPQLTVKVIDTRDNPPGAERLPEQVELHRGGWNTQWLAEADLVVTNPGIALATPEIQTVLAKGTPVVGDIELFAWAVNKPVVAITGSNGKSTVTDLTGVMAKAAGLTVGVGGNIGVPALELLEQDADLYVLELSSFQLETTSSLKLKAAAFLNLSEDHMDRYEGMADYRAAKLRIFDHAELAVVNRDDQETYPEVEMPVVTFGSDEQAYGLEVDGSRTWLLDHGQRVIASDELKLVGKHNLANALVVLALLKAAGVDYHNALNALKNYTGLTHRCQVVADNRGVKWVNDSKATNIASTMAALSGLESTGKLYLLVGGVGKGADFTPLKPIFATLNLQLCCFGLDGDDFMPLHESAIRFNTMEDVIQQISSQLKSGDMVMLSPACASFDQFDNFMARGDAFAVLAQKYA.

Residue 115–121 (GSNGKST) coordinates ATP.

The protein belongs to the MurCDEF family.

It localises to the cytoplasm. It catalyses the reaction UDP-N-acetyl-alpha-D-muramoyl-L-alanine + D-glutamate + ATP = UDP-N-acetyl-alpha-D-muramoyl-L-alanyl-D-glutamate + ADP + phosphate + H(+). The protein operates within cell wall biogenesis; peptidoglycan biosynthesis. Its function is as follows. Cell wall formation. Catalyzes the addition of glutamate to the nucleotide precursor UDP-N-acetylmuramoyl-L-alanine (UMA). This Vibrio parahaemolyticus serotype O3:K6 (strain RIMD 2210633) protein is UDP-N-acetylmuramoylalanine--D-glutamate ligase.